Here is a 503-residue protein sequence, read N- to C-terminus: Probable cytosol aminopeptidase (503 aa).

Lys268 and Asp273 together coordinate Mn(2+). The active site involves Lys280. Residues Asp291, Asp350, and Glu352 each coordinate Mn(2+). Arg354 is an active-site residue.

It belongs to the peptidase M17 family. Requires Mn(2+) as cofactor.

It is found in the cytoplasm. It carries out the reaction Release of an N-terminal amino acid, Xaa-|-Yaa-, in which Xaa is preferably Leu, but may be other amino acids including Pro although not Arg or Lys, and Yaa may be Pro. Amino acid amides and methyl esters are also readily hydrolyzed, but rates on arylamides are exceedingly low.. It catalyses the reaction Release of an N-terminal amino acid, preferentially leucine, but not glutamic or aspartic acids.. Its function is as follows. Presumably involved in the processing and regular turnover of intracellular proteins. Catalyzes the removal of unsubstituted N-terminal amino acids from various peptides. This is Probable cytosol aminopeptidase from Corynebacterium efficiens (strain DSM 44549 / YS-314 / AJ 12310 / JCM 11189 / NBRC 100395).